Consider the following 92-residue polypeptide: Small ribosomal subunit protein uS19c (92 aa).

Belongs to the universal ribosomal protein uS19 family.

It localises to the plastid. The protein localises to the chloroplast. Its function is as follows. Protein S19 forms a complex with S13 that binds strongly to the 16S ribosomal RNA. This is Small ribosomal subunit protein uS19c from Cicer arietinum (Chickpea).